A 76-amino-acid chain; its full sequence is Neuromacin-like protein (76 aa).

Cystine bridges form between Cys-18-Cys-25, Cys-40-Cys-44, Cys-54-Cys-61, and Cys-72-Cys-74.

It belongs to the macin family.

It is found in the secreted. The sequence is that of Neuromacin-like protein from Aplysia californica (California sea hare).